The sequence spans 444 residues: GTPase Der (444 aa).

EngA-type G domains follow at residues 2–167 (LKVA…LKEI) and 173–349 (FKFC…ENLN). GTP is bound by residues 8–15 (GKPNVGKS), 55–59 (DTGGL), 118–121 (NKSE), 179–186 (GRPNVGKS), 226–230 (DTAGI), and 291–294 (NKWD). Residues 350 to 434 (LKFNSKILTD…PITLYFKNKT (85 aa)) enclose the KH-like domain.

This sequence belongs to the TRAFAC class TrmE-Era-EngA-EngB-Septin-like GTPase superfamily. EngA (Der) GTPase family. In terms of assembly, associates with the 50S ribosomal subunit.

Functionally, GTPase that plays an essential role in the late steps of ribosome biogenesis. The chain is GTPase Der from Malacoplasma penetrans (strain HF-2) (Mycoplasma penetrans).